The chain runs to 313 residues: Flagellin (313 aa).

Coiled-coil stretches lie at residues 5–33 (INTNDSALLAQNNLTKSKGILGSAIERLS) and 97–117 (VQSENGSNSKSDLDSIQKEVT). 4 consecutive repeat copies span residues 179–197 (KEAVAAKPAVPAQPAVPAD), 199–217 (KNGVAAKPAVPAQPEVKAQ), 255–259 (VNNLN), and 262–266 (VNNLS). A 2 X 19 AA approximate tandem repeats region spans residues 179–217 (KEAVAAKPAVPAQPAVPADPKNGVAAKPAVPAQPEVKAQ). Positions 190–199 (AQPAVPADPK) are enriched in low complexity. Positions 190-211 (AQPAVPADPKNGVAAKPAVPAQ) are disordered. The stretch at 252–298 (ESTVNNLNNTVNNLSAARSRIEDADYAVEVSNMSRGQILQQAGTSVL) forms a coiled coil. The tract at residues 255 to 266 (VNNLNNTVNNLS) is 2 X 5 AA approximate repeats of V-N-N-L-N.

Belongs to the bacterial flagellin family.

Its subcellular location is the secreted. The protein localises to the bacterial flagellum. Functionally, flagellin is the subunit protein which polymerizes to form the filaments of bacterial flagella. The chain is Flagellin (fliC) from Xenorhabdus nematophila (Achromobacter nematophilus).